The chain runs to 144 residues: Small ribosomal subunit protein eS17 (144 aa).

This sequence belongs to the eukaryotic ribosomal protein eS17 family.

The polypeptide is Small ribosomal subunit protein eS17 (RPS17) (Solanum lycopersicum (Tomato)).